The primary structure comprises 222 residues: MISWLNGLKIEIWENGTRKGVLISCSGVGYEVQLLSRSLQLLNTSKELILWVHEVHREDGSQLIGFLNKLERDLFRKLISVSGVGPQLAISLLEKNPAEQLISAITKKKIAQLTSCPGVGKKTAERLVIELQNKLSDLIGSSLKKTNNHLELEYETNVADEVRSTLLNLDYKNSEIEKAFLEFETSSKSIRSKAQESFEVSKGLDFETLLKETLIRINTESG.

The interval 1–67 (MISWLNGLKI…EDGSQLIGFL (67 aa)) is domain I. Residues 68–146 (NKLERDLFRK…DLIGSSLKKT (79 aa)) are domain II. The segment at 147–155 (NNHLELEYE) is flexible linker. Residues 155 to 222 (ETNVADEVRS…TLIRINTESG (68 aa)) are domain III.

Belongs to the RuvA family. As to quaternary structure, homotetramer. Forms an RuvA(8)-RuvB(12)-Holliday junction (HJ) complex. HJ DNA is sandwiched between 2 RuvA tetramers; dsDNA enters through RuvA and exits via RuvB. An RuvB hexamer assembles on each DNA strand where it exits the tetramer. Each RuvB hexamer is contacted by two RuvA subunits (via domain III) on 2 adjacent RuvB subunits; this complex drives branch migration. In the full resolvosome a probable DNA-RuvA(4)-RuvB(12)-RuvC(2) complex forms which resolves the HJ.

It is found in the cytoplasm. Its function is as follows. The RuvA-RuvB-RuvC complex processes Holliday junction (HJ) DNA during genetic recombination and DNA repair, while the RuvA-RuvB complex plays an important role in the rescue of blocked DNA replication forks via replication fork reversal (RFR). RuvA specifically binds to HJ cruciform DNA, conferring on it an open structure. The RuvB hexamer acts as an ATP-dependent pump, pulling dsDNA into and through the RuvAB complex. HJ branch migration allows RuvC to scan DNA until it finds its consensus sequence, where it cleaves and resolves the cruciform DNA. This chain is Holliday junction branch migration complex subunit RuvA, found in Prochlorococcus marinus (strain SARG / CCMP1375 / SS120).